Consider the following 229-residue polypeptide: Isopentenyl-diphosphate delta-isomerase (229 aa).

Residue Lys-39 participates in substrate binding. Mg(2+) contacts are provided by His-43 and His-54. The 151-residue stretch at Leu-52 to Leu-202 folds into the Nudix hydrolase domain. 2 residues coordinate substrate: Gln-72 and Lys-77. Cys-89 is an active-site residue. Ser-90 provides a ligand contact to substrate. Residues Glu-152 and Glu-154 each contribute to the Mg(2+) site. The active site involves Glu-154.

The protein belongs to the IPP isomerase type 1 family. The cofactor is Mg(2+).

The protein localises to the cytoplasm. It localises to the nucleus. It carries out the reaction isopentenyl diphosphate = dimethylallyl diphosphate. It participates in isoprenoid biosynthesis; dimethylallyl diphosphate biosynthesis; dimethylallyl diphosphate from isopentenyl diphosphate: step 1/1. In terms of biological role, isopentenyl-diphosphate delta-isomerase; part of the second module of ergosterol biosynthesis pathway that includes the middle steps of the pathway. Idi1 catalyzes the 1,3-allylic rearrangement of isopentenyl (IPP) to its highly electrophilic allylic isomer, dimethylallyl diphosphate (DMAPP). The second module is carried out in the vacuole and involves the formation of farnesyl diphosphate, which is also an important intermediate in the biosynthesis of ubiquinone, dolichol, heme and prenylated proteins. Activity by the mevalonate kinase erg12 first converts mevalonate into 5-phosphomevalonate. 5-phosphomevalonate is then further converted to 5-diphosphomevalonate by the phosphomevalonate kinase erg8. The diphosphomevalonate decarboxylase mvd1 then produces isopentenyl diphosphate. The isopentenyl-diphosphate delta-isomerase idi1 then catalyzes the 1,3-allylic rearrangement of the homoallylic substrate isopentenyl (IPP) to its highly electrophilic allylic isomer, dimethylallyl diphosphate (DMAPP). Finally the farnesyl diphosphate synthase fps1 catalyzes the sequential condensation of isopentenyl pyrophosphate with dimethylallyl pyrophosphate, and then with the resultant geranylpyrophosphate to the ultimate product farnesyl pyrophosphate. The polypeptide is Isopentenyl-diphosphate delta-isomerase (Schizosaccharomyces pombe (strain 972 / ATCC 24843) (Fission yeast)).